Reading from the N-terminus, the 382-residue chain is Neuropeptide Y receptor type 2 (382 aa).

The interval 1-39 (MGPIGAEADENQTVEEMKMEPSGPGHTTPRGELAPDSEP) is disordered. The Extracellular segment spans residues 1-46 (MGPIGAEADENQTVEEMKMEPSGPGHTTPRGELAPDSEPELKDSTK). N11 carries an N-linked (GlcNAc...) asparagine glycan. Residues 47–67 (LIEVQIILILAYCSIILLGVV) traverse the membrane as a helical segment. Residues 68 to 87 (GNSLVIHVVIKFKSMRTVTN) lie on the Cytoplasmic side of the membrane. The helical transmembrane segment at 88–108 (FFIANLAVADLLVNTLCLPFT) threads the bilayer. At 109–125 (LTYTLMGEWKMGPVLCH) the chain is on the extracellular side. C124 and C204 are disulfide-bonded. Residues 126–146 (LVPYAQGLAVQVSTITLTVIA) traverse the membrane as a helical segment. The Cytoplasmic portion of the chain corresponds to 147 to 166 (LDRHRCIVYHLESKISKRIS). A helical membrane pass occupies residues 167 to 187 (FLIIGLAWGISALLASPLAIF). The Extracellular segment spans residues 188–217 (REYSLIEIIPDFEIVACTEKWPGEEKSIYG). The chain crosses the membrane as a helical span at residues 218–238 (TVYSLSSLLILYVLPLGIISF). Residues 239–269 (SYARIWSKLKNHVSPGGVNDHYHQRRQKTTK) are Cytoplasmic-facing. Residues 270–290 (MLVCVVVVFAVSWLPLHAFQL) traverse the membrane as a helical segment. At 291–305 (AVDIDSQVLDLKEYK) the chain is on the extracellular side. A helical transmembrane segment spans residues 306-326 (LIFTVFHIIAMCSTFANPLLY). Residues 327 to 382 (GWMNSNYRKAFLSAFRCEQRLDAIHSEVSMTSKAKKNLEATKNGGPDDSFTEATNV) are Cytoplasmic-facing. A lipid anchor (S-palmitoyl cysteine) is attached at C343. A disordered region spans residues 363 to 382 (NLEATKNGGPDDSFTEATNV).

This sequence belongs to the G-protein coupled receptor 1 family.

Its subcellular location is the cell membrane. Functionally, receptor for neuropeptide Y and peptide YY. The polypeptide is Neuropeptide Y receptor type 2 (NPY2R) (Sus scrofa (Pig)).